The primary structure comprises 472 residues: MSAAKLNVKTSSKPNSRIAVEVEVPANRCKNSYDEALSKLSRSISIPGFRKGKVPKTVVIQQLGVKRIQASALESLLQKVWTETLDQEGIEPLCEPELEDGFETILENFNPEKTLILKLETDITPIPTLKKSSGLTAEVENLIFDPKKVDELIEQSRAQLATKVPVTDRAAQKGDIALVSFKGSFSDDGSEIEGGSADSIEIELEQGRMIPGFIEGVIGMNINDEKILKCEFPKDYHQEEAKGRKAEFNVSLEDLKIKELPELNDEFAKQASDKENMSDLRADLEKRLKEDNDRKQAKTRQDSLLDVLVKELEVDIPKSLIDQEVRIIVEQTAQNFAQQGIDVKSMFTPELVKSLMESSKGEAEKKLRQKFALKALAKSEKIEVSDKEINSKLEQVEADIKLSNEKNIDAKRLKEAITDDLLQEKLFAWLEENNTVVEKPPEKARDQIKEKSSKKKTTKTNKEKKSSKTPKS.

A PPIase FKBP-type domain is found at Gly174 to Pro261. Residues Asn433 to Ser472 form a disordered region. A compositionally biased stretch (basic and acidic residues) spans Lys439–Lys451.

This sequence belongs to the FKBP-type PPIase family. Tig subfamily.

The protein localises to the cytoplasm. The enzyme catalyses [protein]-peptidylproline (omega=180) = [protein]-peptidylproline (omega=0). Involved in protein export. Acts as a chaperone by maintaining the newly synthesized protein in an open conformation. Functions as a peptidyl-prolyl cis-trans isomerase. This is Trigger factor from Prochlorococcus marinus (strain NATL1A).